The chain runs to 467 residues: Gamma-aminobutyric acid receptor subunit gamma-3 (467 aa).

The first 17 residues, 1-17, serve as a signal peptide directing secretion; it reads MAPKLLLLLCLFSGLHA. At 18-256 the chain is on the extracellular side; that stretch reads RSRKVEEDEY…FELSRRMGYF (239 aa). Asparagine 110 carries an N-linked (GlcNAc...) asparagine glycan. Cysteine 171 and cysteine 185 form a disulfide bridge. A glycan (N-linked (GlcNAc...) asparagine) is linked at asparagine 228. A helical transmembrane segment spans residues 257–277; it reads TIQTYIPCILTVVLSWVSFWI. Over 278–283 the chain is Cytoplasmic; the sequence is KKDATP. A helical membrane pass occupies residues 284–303; sequence ARTALGITTVLTMTTLSTIA. Topologically, residues 304 to 311 are extracellular; sequence RKSLPRVS. A helical membrane pass occupies residues 312 to 332; that stretch reads YVTAMDLFVTVCFLFVFAALM. Residues 333-446 are Cytoplasmic-facing; that stretch reads EYATLNYYSS…DILELDSYSR (114 aa). Residues 447–467 form a helical membrane-spanning segment; that stretch reads VFFPTSFLLFNLVYWVGYLYL.

Belongs to the ligand-gated ion channel (TC 1.A.9) family. Gamma-aminobutyric acid receptor (TC 1.A.9.5) subfamily. GABRG3 sub-subfamily. Heteropentamer, formed by a combination of alpha (GABRA1-6), beta (GABRB1-3), gamma (GABRG1-3), delta (GABRD), epsilon (GABRE), rho (GABRR1-3), pi (GABRP) and theta (GABRQ) chains, each subunit exhibiting distinct physiological and pharmacological properties. May be palmitoylated. Expressed in brain.

The protein resides in the postsynaptic cell membrane. It localises to the cell membrane. The catalysed reaction is chloride(in) = chloride(out). In terms of biological role, gamma subunit of the heteropentameric ligand-gated chloride channel gated by gamma-aminobutyric acid (GABA), a major inhibitory neurotransmitter in the brain. GABA-gated chloride channels, also named GABA(A) receptors (GABAAR), consist of five subunits arranged around a central pore and contain GABA active binding site(s) located at the alpha and beta subunit interface(s). When activated by GABA, GABAARs selectively allow the flow of chloride across the cell membrane down their electrochemical gradient. The sequence is that of Gamma-aminobutyric acid receptor subunit gamma-3 from Homo sapiens (Human).